The primary structure comprises 656 residues: Chaperone protein DnaK (656 aa).

Disordered regions lie at residues 488–532 and 579–656; these read EMQE…DAVD and YQQQ…DEDE. Basic and acidic residues predominate over residues 492 to 513; the sequence is EAEKHAEEDEKRRERIEARNEA. Residues 523–532 show a composition bias toward acidic residues; that stretch reads LLDENEDAVD. The segment covering 584-635 has biased composition (gly residues); sequence GEGGAGAGAGAAGGMGGAGPGGMGGAGPGGMGGAGPGGMGGAGPGAGAGQQG. The span at 636 to 656 shows a compositional bias: acidic residues; it reads DGEEFVDADFEDVDDEDDEDE.

Belongs to the heat shock protein 70 family.

Its function is as follows. Acts as a chaperone. The chain is Chaperone protein DnaK from Natronomonas pharaonis (strain ATCC 35678 / DSM 2160 / CIP 103997 / JCM 8858 / NBRC 14720 / NCIMB 2260 / Gabara) (Halobacterium pharaonis).